The chain runs to 442 residues: GTPase Der (442 aa).

EngA-type G domains are found at residues 2–168 (ATVL…EEAG) and 182–356 (LKVA…EKID). GTP-binding positions include 8–15 (GRPNVGKS), 55–59 (DTCGL), 118–121 (NKVE), 188–195 (GKPNAGKS), 235–239 (DTAGM), and 301–304 (NKSD). A KH-like domain is found at 357 to 442 (LRIPTGLLNN…PIFIKLRRKK (86 aa)).

The protein belongs to the TRAFAC class TrmE-Era-EngA-EngB-Septin-like GTPase superfamily. EngA (Der) GTPase family. Associates with the 50S ribosomal subunit.

Functionally, GTPase that plays an essential role in the late steps of ribosome biogenesis. In Kosmotoga olearia (strain ATCC BAA-1733 / DSM 21960 / TBF 19.5.1), this protein is GTPase Der.